The following is a 416-amino-acid chain: MNKQSWLLNLSLLKTHPAFRAVFLARFISIVSLGLLGVAVPVQIQMMTHSTWQVGLSVTLTGGAMFVGLMVGGVLADRYERKKVILLARGTCGIGFIGLCLNALLPEPSLLAIYLLGLWDGFFASLGVTALLAATPALVGRENLMQAGALTMLTVRLGSVISPMIGGLLLATGGVAWNYGLAAAGTFITLLPLLSLPALPPPPQPREHPLKSLLAGFRFLLASPLVGGIALLGGLLTMASAVRVLYPALADNWQMSAAEIGFLYAAIPLGAAIGALTSGKLAHSARPGLLMLLSTLGSFLAIGLFGLMPMWILGVVCLALFGWLSAVSSLLQYTMLQTQTPEAMLGRINGLWTAQNVTGDAIGAALLGGLGAMMTPVASASASGFGLLIIGVLLLLVLVELRRFRQTPPQVTASDS.

Residues 1–21 (MNKQSWLLNLSLLKTHPAFRA) lie on the Cytoplasmic side of the membrane. Residues 22 to 42 (VFLARFISIVSLGLLGVAVPV) traverse the membrane as a helical segment. Residues 43–55 (QIQMMTHSTWQVG) are Periplasmic-facing. A helical transmembrane segment spans residues 56 to 76 (LSVTLTGGAMFVGLMVGGVLA). Over 77–83 (DRYERKK) the chain is Cytoplasmic. A helical membrane pass occupies residues 84-104 (VILLARGTCGIGFIGLCLNAL). Residues 105 to 109 (LPEPS) are Periplasmic-facing. Residues 110-130 (LLAIYLLGLWDGFFASLGVTA) form a helical membrane-spanning segment. Over 131-156 (LLAATPALVGRENLMQAGALTMLTVR) the chain is Cytoplasmic. Residues 157–177 (LGSVISPMIGGLLLATGGVAW) traverse the membrane as a helical segment. A topological domain (periplasmic) is located at residue Asn-178. The helical transmembrane segment at 179–199 (YGLAAAGTFITLLPLLSLPAL) threads the bilayer. Topologically, residues 200–218 (PPPPQPREHPLKSLLAGFR) are cytoplasmic. The helical transmembrane segment at 219–239 (FLLASPLVGGIALLGGLLTMA) threads the bilayer. The Periplasmic portion of the chain corresponds to 240–256 (SAVRVLYPALADNWQMS). Residues 257–277 (AAEIGFLYAAIPLGAAIGALT) form a helical membrane-spanning segment. The Cytoplasmic segment spans residues 278-287 (SGKLAHSARP). A helical membrane pass occupies residues 288 to 307 (GLLMLLSTLGSFLAIGLFGL). Topologically, residues 308–313 (MPMWIL) are periplasmic. A helical transmembrane segment spans residues 314–336 (GVVCLALFGWLSAVSSLLQYTML). Residues 337–356 (QTQTPEAMLGRINGLWTAQN) are Cytoplasmic-facing. Residues 357–377 (VTGDAIGAALLGGLGAMMTPV) traverse the membrane as a helical segment. A topological domain (periplasmic) is located at residue Ala-378. The helical transmembrane segment at 379–399 (SASASGFGLLIIGVLLLLVLV) threads the bilayer. Residues 400–416 (ELRRFRQTPPQVTASDS) are Cytoplasmic-facing.

Belongs to the major facilitator superfamily. EntS (TC 2.A.1.38) family.

It is found in the cell inner membrane. In terms of biological role, component of an export pathway for enterobactin. This is Enterobactin exporter EntS from Shigella boydii serotype 18 (strain CDC 3083-94 / BS512).